A 431-amino-acid chain; its full sequence is Probable prephenate dehydrogenase [NADP(+)] (431 aa).

Residue 5–34 coordinates NADP(+); sequence FQVGIIGFGDMGRLYAEYISKAGWRVNVCD. Positions 5 to 285 constitute a Prephenate/arogenate dehydrogenase domain; that stretch reads FQVGIIGFGD…GENMDRNSSG (281 aa).

Belongs to the prephenate/arogenate dehydrogenase family.

The protein localises to the cytoplasm. The enzyme catalyses prephenate + NADP(+) = 3-(4-hydroxyphenyl)pyruvate + CO2 + NADPH. The protein operates within amino-acid biosynthesis; L-tyrosine biosynthesis; (4-hydroxyphenyl)pyruvate from prephenate (NADP(+) route): step 1/1. The polypeptide is Probable prephenate dehydrogenase [NADP(+)] (tyr1) (Schizosaccharomyces pombe (strain 972 / ATCC 24843) (Fission yeast)).